The sequence spans 193 residues: Interleukin-23 subunit alpha (193 aa).

Residues 1–22 (MLGSRAVMLMLLLLLLPWTSQG) form the signal peptide.

The protein belongs to the IL-6 superfamily. As to quaternary structure, heterodimer with IL12B; disulfide-linked. The heterodimer is known as interleukin IL-23. Interacts with IL23R; this interaction enables recruitment of IL12RB1.

It localises to the secreted. Its function is as follows. Associates with IL12B to form the pro-inflammatory cytokine IL-23 that plays different roles in innate and adaptive immunity. Released by antigen-presenting cells such as dendritic cells or macrophages, binds to a heterodimeric receptor complex composed of IL12RB1 and IL23R to activate JAK2 and TYK2 which then phosphorylate the receptor to form a docking site leading to the phosphorylation of STAT3 and STAT4. This process leads to activation of several pathways including p38 MAPK or NF-kappa-B and promotes the production of pro-inflammatory cytokines such as interleukin-17A/IL17A. In turn, participates in the early and effective intracellular bacterial clearance. Promotes the expansion and survival of T-helper 17 cells, a CD4-positive helper T-cell subset that produces IL-17, as well as other IL-17-producing cells. This Sus scrofa (Pig) protein is Interleukin-23 subunit alpha (IL23A).